Consider the following 98-residue polypeptide: mRNA interferase toxin MqsR (98 aa).

As to quaternary structure, might be a dimer. Also reported to be a monomer. Crystallizes as a heterotetramer with MqsA, MqsR-MqsA(2)-MqsR. Purifies as a possible heterohexamer of 2 MqsR dimers and 1 MqsA dimer. When the 2 dissociate the MsqR mRNA interferase becomes active.

Its function is as follows. Toxic component of a type II toxin-antitoxin (TA) system. Plays a significant role in the control of biofilm formation and induction of persister cells in the presence of antibiotics. An mRNA interferase which has been reported to be translation-independent. It has also been reported to be translation-dependent. Cleavage has been reported to occur on either side of G in the sequence GCU. Also reported to cleave after C in GC(A/U) sequences. There are only 14 genes in E.coli W3110 (and probably also MG1655) that do not have a GCU sequence and thus are resistant to the mRNA interferase activity; among these is the gene for toxin GhoT. Overexpression of MqsR causes cessation of cell growth and inhibits cell proliferation via inhibition of translation as well as increasing persister cell formation; these effects are overcome by concomitant or subsequent expression of antitoxin MqsA. Cross-talk can occur between different TA systems. Ectopic expression of this toxin induces transcription of the relBEF TA system operon with specific cleavage of the relBEF mRNA produced. Regulates the expression of GhoT/GhoS, a type V TA system. Persistence depends on toxin GhoT activity, which MqsR controls at the post-transcriptional level by selectively degrading the antitoxin ghoS segment of the ghoST mRNA. Overexpression leads to a dramatic increase in tolerance to the antibiotic ofloxacin. This TA system mediates cell growth during bile acid deoxycholate stress by degrading mRNA for probable deoxycholate-binding protein YgiS; bile acid detergents such as deoxycholate are important for host defense against bacterial growth in the gall bladder and duodenum. Functionally, initially reported to act as a cotranscription factor with MqsA. Following further experiments, the MqsR-MqsA complex does not bind DNA and all reported data are actually due to a small fraction of free MqsA alone binding DNA. Addition of MqsR to a preformed MqsA-promoter DNA complex causes dissociation of the MqsA-DNA complex, probably causing derepression of MqsA-repressed transcripts. Does not bind DNA in the presence or absence of MqsA. The chain is mRNA interferase toxin MqsR from Escherichia coli (strain K12).